A 391-amino-acid chain; its full sequence is Elongation factor Tu (391 aa).

Residues 10–201 (KPHVNIGTIG…AVDEYIPTPA (192 aa)) enclose the tr-type G domain. Residues 19 to 26 (GHVDHGKT) form a G1 region. 19 to 26 (GHVDHGKT) provides a ligand contact to GTP. Residue T26 participates in Mg(2+) binding. A G2 region spans residues 55–59 (GITIS). The segment at 76–79 (DCPG) is G3. GTP contacts are provided by residues 76–80 (DCPGH) and 131–134 (NKVD). The segment at 131–134 (NKVD) is G4. Positions 169–171 (SAL) are G5.

This sequence belongs to the TRAFAC class translation factor GTPase superfamily. Classic translation factor GTPase family. EF-Tu/EF-1A subfamily. Monomer.

It localises to the cytoplasm. The catalysed reaction is GTP + H2O = GDP + phosphate + H(+). In terms of biological role, GTP hydrolase that promotes the GTP-dependent binding of aminoacyl-tRNA to the A-site of ribosomes during protein biosynthesis. In Cereibacter sphaeroides (strain ATCC 17029 / ATH 2.4.9) (Rhodobacter sphaeroides), this protein is Elongation factor Tu.